A 519-amino-acid chain; its full sequence is Membrane-bound lytic murein transglycosylase F (519 aa).

A signal peptide spans 1-32 (MKKLKLNYLLIGVVTLLLAVALWPAIPWSGKA). The segment at 33-269 (DNRIAAIQAR…RLEEKYLGHG (237 aa)) is non-LT domain. The tract at residues 270 to 519 (NDFDYVDTRS…PNTLSPVSPR (250 aa)) is LT domain. Residue Glu314 is part of the active site. The disordered stretch occupies residues 495–519 (PFSQAGAGGKTHSALPNTLSPVSPR). The segment covering 508–519 (ALPNTLSPVSPR) has biased composition (polar residues).

This sequence in the N-terminal section; belongs to the bacterial solute-binding protein 3 family. In the C-terminal section; belongs to the transglycosylase Slt family.

It localises to the cell outer membrane. It carries out the reaction Exolytic cleavage of the (1-&gt;4)-beta-glycosidic linkage between N-acetylmuramic acid (MurNAc) and N-acetylglucosamine (GlcNAc) residues in peptidoglycan, from either the reducing or the non-reducing ends of the peptidoglycan chains, with concomitant formation of a 1,6-anhydrobond in the MurNAc residue.. Its function is as follows. Murein-degrading enzyme that degrades murein glycan strands and insoluble, high-molecular weight murein sacculi, with the concomitant formation of a 1,6-anhydromuramoyl product. Lytic transglycosylases (LTs) play an integral role in the metabolism of the peptidoglycan (PG) sacculus. Their lytic action creates space within the PG sacculus to allow for its expansion as well as for the insertion of various structures such as secretion systems and flagella. This Cronobacter sakazakii (strain ATCC BAA-894) (Enterobacter sakazakii) protein is Membrane-bound lytic murein transglycosylase F.